Consider the following 184-residue polypeptide: ATP synthase subunit b (184 aa).

A helical membrane pass occupies residues 15–34 (VQPGLIFWTLVTFVIAAVVL).

This sequence belongs to the ATPase B chain family. F-type ATPases have 2 components, F(1) - the catalytic core - and F(0) - the membrane proton channel. F(1) has five subunits: alpha(3), beta(3), gamma(1), delta(1), epsilon(1). F(0) has three main subunits: a(1), b(2) and c(10-14). The alpha and beta chains form an alternating ring which encloses part of the gamma chain. F(1) is attached to F(0) by a central stalk formed by the gamma and epsilon chains, while a peripheral stalk is formed by the delta and b chains.

It localises to the cell inner membrane. In terms of biological role, f(1)F(0) ATP synthase produces ATP from ADP in the presence of a proton or sodium gradient. F-type ATPases consist of two structural domains, F(1) containing the extramembraneous catalytic core and F(0) containing the membrane proton channel, linked together by a central stalk and a peripheral stalk. During catalysis, ATP synthesis in the catalytic domain of F(1) is coupled via a rotary mechanism of the central stalk subunits to proton translocation. Its function is as follows. Component of the F(0) channel, it forms part of the peripheral stalk, linking F(1) to F(0). The protein is ATP synthase subunit b of Myxococcus xanthus (strain DK1622).